The chain runs to 306 residues: Ectoine dioxygenase (306 aa).

An L-ectoine-binding site is contributed by Gln-127. Lys-133 contributes to the 2-oxoglutarate binding site. Fe cation contacts are provided by His-144, Asp-146, and His-245.

This sequence belongs to the PhyH family. EctD subfamily. In terms of assembly, homodimer. Requires Fe(2+) as cofactor.

The enzyme catalyses L-ectoine + 2-oxoglutarate + O2 = 5-hydroxyectoine + succinate + CO2. Involved in the biosynthesis of 5-hydroxyectoine, called compatible solute, which helps organisms to survive extreme osmotic stress by acting as a highly soluble organic osmolyte. Catalyzes the 2-oxoglutarate-dependent selective hydroxylation of L-ectoine to yield (4S,5S)-5-hydroxyectoine. The chain is Ectoine dioxygenase from Sphingopyxis alaskensis (strain DSM 13593 / LMG 18877 / RB2256) (Sphingomonas alaskensis).